Reading from the N-terminus, the 152-residue chain is 6,7-dimethyl-8-ribityllumazine synthase (152 aa).

Residues Phe18, 49–51 (ALE), and 75–77 (CVI) each bind 5-amino-6-(D-ribitylamino)uracil. Residue 80 to 81 (ET) coordinates (2S)-2-hydroxy-3-oxobutyl phosphate. His83 (proton donor) is an active-site residue. Asn108 contacts 5-amino-6-(D-ribitylamino)uracil. Residue Arg122 coordinates (2S)-2-hydroxy-3-oxobutyl phosphate.

It belongs to the DMRL synthase family.

The catalysed reaction is (2S)-2-hydroxy-3-oxobutyl phosphate + 5-amino-6-(D-ribitylamino)uracil = 6,7-dimethyl-8-(1-D-ribityl)lumazine + phosphate + 2 H2O + H(+). It participates in cofactor biosynthesis; riboflavin biosynthesis; riboflavin from 2-hydroxy-3-oxobutyl phosphate and 5-amino-6-(D-ribitylamino)uracil: step 1/2. Functionally, catalyzes the formation of 6,7-dimethyl-8-ribityllumazine by condensation of 5-amino-6-(D-ribitylamino)uracil with 3,4-dihydroxy-2-butanone 4-phosphate. This is the penultimate step in the biosynthesis of riboflavin. The polypeptide is 6,7-dimethyl-8-ribityllumazine synthase (Bartonella bacilliformis (strain ATCC 35685 / KC583 / Herrer 020/F12,63)).